We begin with the raw amino-acid sequence, 274 residues long: MASKSGDGGTMCALEFTVQMSCQSCVDAVHKTLKGAAGVQNVEVQLENQMVLVQTTLPSQEVQALLESTGRQAVLKGMGSSQLKNLGAAVAIMEGSGTVQGVVRFLQLSSELCLIEGTIDGLEPGLHGLHVHQYGDLTKDCSSCGDHFNPDGASHGGPQDTDRHRGDLGNVHAEASGRATFRIEDKQLKVWDVIGRSLVVDEGEDDLGRGGHPLSKVTGNSGKRLACGIIARSAGLFQNPKQICSCDGLTIWEERGRPIAGQGRKDSAQPPAHL.

Residues 11–74 (MCALEFTVQM…LLESTGRQAV (64 aa)) enclose the HMA domain. Residues Cys22 and Cys25 each coordinate Cu cation. Lys76 participates in a covalent cross-link: Glycyl lysine isopeptide (Lys-Gly) (interchain with G-Cter in ubiquitin). Positions 88–234 (AAVAIMEGSG…LACGIIARSA (147 aa)) are superoxide dismutase-like. A disulfide bridge links Cys141 with Cys227. 4 residues coordinate Zn(2+): His147, His155, His164, and Asp167. Glycyl lysine isopeptide (Lys-Gly) (interchain with G-Cter in ubiquitin) cross-links involve residues Lys189, Lys216, and Lys241. 2 residues coordinate Cu cation: Cys244 and Cys246. Position 267 is a phosphoserine (Ser267).

The protein in the C-terminal section; belongs to the Cu-Zn superoxide dismutase family. As to quaternary structure, homodimer, and heterodimer with SOD1. Interacts with COMMD1. Interacts with XIAP/BIRC4. Interacts with SLC31A1(via C-terminal domain); this interaction is Cu(1+)-mediated. The heterodimer CCS:SOD1 interacts with SLC31A1; this heterotrimer is Cu(1+)-mediated and its maintenance is regulated through SOD1 activation. It depends on Cu(2+) as a cofactor. Requires Zn(2+) as cofactor. Ubiquitinion by XIAP/BIRC4 leads to enhancement of its chaperone activity toward its physiologic target, SOD1, rather than proteasomal degradation. XIAP/BIRC4 preferentially ubiquitinates at Lys-241.

It is found in the cytoplasm. Its function is as follows. Delivers copper to copper zinc superoxide dismutase (SOD1). The chain is Copper chaperone for superoxide dismutase from Rattus norvegicus (Rat).